The chain runs to 292 residues: Protein-L-isoaspartate O-methyltransferase (292 aa).

The tract at residues 1–76 is disordered; that stretch reads MTEKKRFPLS…AAAPSSNERA (76 aa). Positions 28–48 are enriched in polar residues; the sequence is NRSSTSGKVATPQTATQNASQ. Ser138 is a catalytic residue.

The protein belongs to the methyltransferase superfamily. L-isoaspartyl/D-aspartyl protein methyltransferase family.

Its subcellular location is the cytoplasm. The catalysed reaction is [protein]-L-isoaspartate + S-adenosyl-L-methionine = [protein]-L-isoaspartate alpha-methyl ester + S-adenosyl-L-homocysteine. In terms of biological role, catalyzes the methyl esterification of L-isoaspartyl residues in peptides and proteins that result from spontaneous decomposition of normal L-aspartyl and L-asparaginyl residues. It plays a role in the repair and/or degradation of damaged proteins. The polypeptide is Protein-L-isoaspartate O-methyltransferase (Janthinobacterium sp. (strain Marseille) (Minibacterium massiliensis)).